A 436-amino-acid chain; its full sequence is Succinyl-CoA:glutarate CoA-transferase (436 aa).

The transit peptide at 1–8 (MLWMLARA) directs the protein to the mitochondrion. Asp203 functions as the Nucleophile in the catalytic mechanism. Lys392 and Lys423 each carry N6-acetyllysine.

It belongs to the CoA-transferase III family.

The protein resides in the mitochondrion. It carries out the reaction glutarate + succinyl-CoA = glutaryl-CoA + succinate. The catalysed reaction is 3-hydroxy-3-methylglutarate + succinyl-CoA = (3S)-3-hydroxy-3-methylglutaryl-CoA + succinate. The enzyme catalyses 3-hydroxy-3-methylglutarate + glutaryl-CoA = (3S)-3-hydroxy-3-methylglutaryl-CoA + glutarate. It catalyses the reaction hexanedioate + glutaryl-CoA = hexanedioyl-CoA + glutarate. It carries out the reaction itaconate + glutaryl-CoA = itaconyl-CoA + glutarate. The catalysed reaction is itaconate + succinyl-CoA = itaconyl-CoA + succinate. Its function is as follows. Coenzyme A (CoA) transferase that reversibly catalyzes the transfer of a CoA moiety from a dicarboxyl-CoA to a dicarboxylate in a metabolite recycling process. Displays preference for succinyl-CoA and glutarate-CoA as dicarboxyl-CoA donors and glutarate, succinate, adipate/hexanedioate, itaconate and 3-hydroxy-3-methylglutarate as dicarboxylate acceptors. Acts on intermediates or end products of lysine and tryptophan degradation pathway, in particular catalyzes succinyl-CoA-dependent reesterification of free glutarate into glutaryl-CoA to prevent renal excretion of glutarate. Upon inflammation, may convert macrophage-derived itaconate to itaconyl-CoA in erythroid precursors where it negatively regulates the TCA cycle and heme synthesis to limit erythroid differentiation in the context of stress erythropoiesis. The protein is Succinyl-CoA:glutarate CoA-transferase of Mus musculus (Mouse).